The following is a 385-amino-acid chain: Acetate kinase (385 aa).

Position 9 (Asn9) interacts with Mg(2+). An ATP-binding site is contributed by Lys16. Arg87 contributes to the substrate binding site. Asp144 (proton donor/acceptor) is an active-site residue. Residues 202-206 (HLGSG) and 277-279 (DIR) contribute to the ATP site. Residue Glu373 coordinates Mg(2+).

Belongs to the acetokinase family. Homodimer. The cofactor is Mg(2+). Requires Mn(2+) as cofactor.

Its subcellular location is the cytoplasm. The enzyme catalyses acetate + ATP = acetyl phosphate + ADP. It participates in metabolic intermediate biosynthesis; acetyl-CoA biosynthesis; acetyl-CoA from acetate: step 1/2. In terms of biological role, catalyzes the formation of acetyl phosphate from acetate and ATP. Can also catalyze the reverse reaction. This Rickettsia akari (strain Hartford) protein is Acetate kinase.